We begin with the raw amino-acid sequence, 558 residues long: FRIGIDA-like protein 3 (558 aa).

Positions 9–102 (SLMDSTSSKI…ALERLQKKRD (94 aa)) form a coiled coil. Residues 454–463 (AKADKKRATE) show a composition bias toward basic and acidic residues. The disordered stretch occupies residues 454 to 494 (AKADKKRATEPMKPQPKRPRGAQPRVTDNNNNINNNKTGYG).

This sequence belongs to the Frigida family.

This is FRIGIDA-like protein 3 (FRL3) from Arabidopsis thaliana (Mouse-ear cress).